We begin with the raw amino-acid sequence, 172 residues long: Agamous-like MADS-box protein AGL29 (172 aa).

One can recognise an MADS-box domain in the interval 1–61 (MGRRKIKMEM…GKPFSYGKPN (61 aa)). The stretch at 86 to 123 (NYRPKLKRLSERLDLLNQEVEAEKERGEKSQEKLESAG) forms a coiled coil. The interval 106-125 (EAEKERGEKSQEKLESAGDE) is disordered.

Expressed in pollen.

It is found in the nucleus. Functionally, probable transcription factor. This Arabidopsis thaliana (Mouse-ear cress) protein is Agamous-like MADS-box protein AGL29.